The sequence spans 30 residues: Photosystem II reaction center protein Psb30 (30 aa).

Residues 1 to 6 lie on the Lumenal side of the membrane; that stretch reads EVIAQL. Residues 7–21 traverse the membrane as a helical segment; the sequence is TMIAMIGIAGPMIIF. At 22-30 the chain is on the cytoplasmic side; that stretch reads LLAVRRGNL.

Belongs to the Psb30/Ycf12 family. As to quaternary structure, PSII is composed of 1 copy each of membrane proteins PsbA, PsbB, PsbC, PsbD, PsbE, PsbF, PsbH, PsbI, PsbJ, PsbK, PsbL, PsbM, PsbT, PsbX, PsbY, PsbZ, Psb30/Ycf12, peripheral proteins PsbO, CyanoQ (PsbQ), PsbU, PsbV and a large number of cofactors. It forms dimeric complexes. The cofactor is PSII binds multiple chlorophylls, carotenoids and specific lipids..

The protein localises to the cellular thylakoid membrane. Its function is as follows. A core subunit of photosystem II (PSII), probably helps stabilize the reaction center. PSII is a light-driven water plastoquinone oxidoreductase, using light energy to abstract electrons from H(2)O, generating a proton gradient subsequently used for ATP formation. The polypeptide is Photosystem II reaction center protein Psb30 (Thermostichus vulcanus (Synechococcus vulcanus)).